The sequence spans 107 residues: Small ribosomal subunit protein uS10c (107 aa).

Belongs to the universal ribosomal protein uS10 family. As to quaternary structure, part of the 30S ribosomal subunit.

It is found in the plastid. The protein resides in the chloroplast. In terms of biological role, involved in the binding of tRNA to the ribosomes. The chain is Small ribosomal subunit protein uS10c from Thalassiosira pseudonana (Marine diatom).